We begin with the raw amino-acid sequence, 266 residues long: HLA class II histocompatibility antigen, DR beta 3 chain (266 aa).

The N-terminal stretch at methionine 1–alanine 29 is a signal peptide. A beta-1 region spans residues glycine 30 to valine 124. The Extracellular segment spans residues glycine 30–lysine 227. Disulfide bonds link cysteine 44/cysteine 108 and cysteine 146/cysteine 202. N-linked (GlcNAc...) asparagine glycosylation occurs at asparagine 48. Positions histidine 125–lysine 227 are beta-2. Positions proline 126 to threonine 214 constitute an Ig-like C1-type domain. A helical transmembrane segment spans residues methionine 228–isoleucine 248. The Cytoplasmic segment spans residues tyrosine 249–serine 266.

This sequence belongs to the MHC class II family. As to quaternary structure, heterotrimer that consists of an alpha chain HLA-DRA, a beta chain HLA-DRB1 and a peptide (peptide-MHCII). Newly synthesized alpha and beta chains forms a heterodimer (MHCII) that associates with the CD74/invariant chain (Ii) in the endoplasmic reticulum (ER). Ii is a trimer composed of three subunits and each subunit interacts with one MHCII dimer, blocking the peptide-binding cleft. As a result, MHCII molecules cannot bind peptides present in the ER. The complex of MHCII and CD74/Ii is transported in vesicles from ER to Golgi to lysosomes, where it encounters antigenic peptides generated via proteolysis of endocytosed antigens. MHCII dimers are dissociated from CD74/Ii by the combined action of proteolysis and HLA-DM. Lysosomal enzymes such as cathepsin, degrade CD74/Ii leaving a 24 amino acid remnant called class II-associated Ii or CLIP. Interacts (via the peptide binding cleft) with CLIP; this interaction inhibits antigen peptide binding before entry in the endosomal compartment. The displacement of CLIP and replacement by a high affinity peptide in lysosomes is performed by HLA-DM heterodimer. HLA-DM catalyzes CLIP dissociation from MHCII, stabilizes empty MHCII and mediates the selection of high affinity peptides. Interacts with HLA-DM heterodimer; this interaction is direct. Interacts with TCR (via CDR3). Interacts (via beta-2 domain) with CD4 coreceptor (via Ig-like V-type domain); this interaction is of exceptionally low affinity yet necessary for optimal recognition of antigenic peptides. Ubiquitinated by MARCHF1 and MARCHF8 at Lys-254 leading to sorting into the endosome system and down-regulation of MHC class II. In terms of tissue distribution, expressed in professional APCs: monocyte/macrophages, dendritic cells and B cells (at protein level).

The protein localises to the cell membrane. It is found in the endoplasmic reticulum membrane. It localises to the lysosome membrane. Its subcellular location is the late endosome membrane. The protein resides in the autolysosome membrane. In terms of biological role, a beta chain of antigen-presenting major histocompatibility complex class II (MHCII) molecule. In complex with the alpha chain HLA-DRA, displays antigenic peptides on professional antigen presenting cells (APCs) for recognition by alpha-beta T cell receptor (TCR) on HLA-DRB3-restricted CD4-positive T cells. This guides antigen-specific T-helper effector functions, both antibody-mediated immune response and macrophage activation, to ultimately eliminate the infectious agents and transformed cells. Typically presents extracellular peptide antigens of 10 to 30 amino acids that arise from proteolysis of endocytosed antigens in lysosomes. In the tumor microenvironment, presents antigenic peptides that are primarily generated in tumor-resident APCs likely via phagocytosis of apoptotic tumor cells or macropinocytosis of secreted tumor proteins. Presents peptides derived from intracellular proteins that are trapped in autolysosomes after macroautophagy, a mechanism especially relevant for T cell selection in the thymus and central immune tolerance. The selection of the immunodominant epitopes follows two processing modes: 'bind first, cut/trim later' for pathogen-derived antigenic peptides and 'cut first, bind later' for autoantigens/self-peptides. The anchor residue at position 1 of the peptide N-terminus, usually a large hydrophobic residue, is essential for high affinity interaction with MHCII molecules. ALLELE DRB3*01:01: Exclusively presents several immunogenic epitopes derived from C.tetani neurotoxin tetX, playing a significant role in immune recognition and long-term protection. Presents viral epitopes derived from HHV-6B U11, TRX2/U56 and U85 antigens to polyfunctional CD4-positive T cells with cytotoxic activity implicated in control of HHV-6B infection. Its function is as follows. ALLELE DRB3*02:02 Exclusively presents several immunogenic epitopes derived from C.tetani neurotoxin tetX, playing a significant role in immune recognition and long-term protection. Upon EBV infection, presents to CD4-positive T cells latent antigen EBNA2 (PRSPTVFYNIPPMPLPPSQL) and lytic antigen BZLF1 (LTAYHVSTAPTGSWF) peptides, driving oligoclonal expansion and selection of virus-specific memory T cell subsets with cytotoxic potential to directly eliminate virus-infected B cells. Presents viral epitopes derived from HHV-6B U11, gB/U39 and gH/U48 antigens to polyfunctional CD4-positive T cells with cytotoxic activity implicated in control of HHV-6B infection. Plays a minor role in CD4-positive T cell immune response against Dengue virus by presenting conserved peptides from capsid and non-structural NS3 proteins. Displays peptides derived from IAV matrix protein M, implying a role in protection against IAV infection. In the context of tumor immunesurveillance, may present to T-helper 1 cells an immunogenic epitope derived from tumor-associated antigen WT1 (KRYFKLSHLQMHSRKH), likely providing for effective antitumor immunity in a wide range of solid and hematological malignancies. Presents to Vbeta2-positive T-helper 1 cells specifically an immunodominant peptide derived from tumor antigen CTAG1A/NY-ESO-1(PGVLLKEFTVSGNILTIRLTAADHR) and confers protective memory response. In metastatic epithelial tumors, presents to intratumoral CD4-positive T cells a TP53 neoantigen (HYNYMCNSSCMGSMNRRPILTIITL) carrying G245S hotspot driver mutation and may mediate tumor regression. Functionally, ALLELE DRB3*03:01: Presents a series of conserved peptides derived from the M.tuberculosis PPE family of proteins, in particular PPE29 and PPE33, known to be highly immunogenic. Presents immunogenic epitopes derived from C.tetani neurotoxin tetX, playing a role in immune recognition and long-term protection. Displays immunodominant viral peptides from HCV non-structural protein NS2, as part of a broad range T-helper response to resolve infection. This Homo sapiens (Human) protein is HLA class II histocompatibility antigen, DR beta 3 chain (HLA-DRB3).